Reading from the N-terminus, the 898-residue chain is Serine/threonine-protein kinase TAO3 (898 aa).

The Protein kinase domain occupies 24-277; sequence FIGLHEIGHG…SAELLRHDFV (254 aa). ATP contacts are provided by residues 30 to 38 and lysine 53; that span reads IGHGSFGAV. The active-site Proton acceptor is aspartate 147. Disordered stretches follow at residues 316 to 362 and 405 to 425; these read TRNG…SQSS and DEAG…VQSQ. Serine 324 is subject to Phosphoserine; by ATM. Residues serine 331, serine 343, serine 346, and serine 349 each carry the phosphoserine modification. Over residues 334–351 the composition is skewed to polar residues; it reads GTSLNREMDSLGSNHSIP. Positions 352–362 are enriched in low complexity; it reads SMSVSTGSQSS. The residue at position 357 (threonine 357) is a Phosphothreonine. Serine 359 is subject to Phosphoserine. The span at 405-416 shows a compositional bias: basic and acidic residues; sequence DEAGHGDPRPEP. Serine 442 is modified (phosphoserine). 3 coiled-coil regions span residues 452 to 502, 548 to 649, and 754 to 879; these read EQEN…THAN, FLES…HAML, and LKTL…DMES. Residues 565–596 are disordered; sequence EEMNEDHSTPKKEKQERISKHKENLQHTQAEE. Lysine 830 is modified (N6-acetyllysine).

The protein belongs to the protein kinase superfamily. STE Ser/Thr protein kinase family. STE20 subfamily. As to quaternary structure, self-associates. Interacts with ERN1 and TRAF2. Interaction with TRAF2 is facilitated under ER stress conditions, such as treatment with tunicamycin, and may promote TRAF2 phosphorylation. Interacts (via N-terminus) with STK25; the interaction promotes STK25 abundance at the level of protein expression and/or stability. Post-translationally, autophosphorylated. Phosphorylation at Ser-324 by ATM following DNA damage is required for activation of the p38/MAPK14 stress-activated MAPK cascade. Phosphorylated at Ser-324 and on Tyr residues during T cell activation. Phosphorylated by LRRK2.

It localises to the cytoplasm. The protein resides in the cell membrane. It is found in the membrane raft. Its subcellular location is the lipid droplet. It catalyses the reaction L-seryl-[protein] + ATP = O-phospho-L-seryl-[protein] + ADP + H(+). It carries out the reaction L-threonyl-[protein] + ATP = O-phospho-L-threonyl-[protein] + ADP + H(+). Serine/threonine-protein kinase that acts as a regulator of the p38/MAPK14 stress-activated MAPK cascade and of the MAPK8/JNK cascade. In response to DNA damage, involved in the G2/M transition DNA damage checkpoint by activating the p38/MAPK14 stress-activated MAPK cascade, probably by mediating phosphorylation of upstream MAP2K3 and MAP2K6 kinases. Inhibits basal activity of the MAPK8/JNK cascade and diminishes its activation in response to epidermal growth factor (EGF). Positively regulates canonical T cell receptor (TCR) signaling by preventing early PTPN6/SHP1-mediated inactivation of LCK, ensuring sustained TCR signaling that is required for optimal activation and differentiation of T cells. Phosphorylates PTPN6/SHP1 on 'Thr-394', leading to its polyubiquitination and subsequent proteasomal degradation. Required for cell surface expression of metalloprotease ADAM10 on type 1 transitional B cells which is necessary for their NOTCH-mediated development into marginal zone B cells. Also required for the NOTCH-mediated terminal differentiation of splenic conventional type 2 dendritic cells. Positively regulates osteoblast differentiation by acting as an upstream activator of the JNK pathway. Promotes JNK signaling in hepatocytes and positively regulates hepatocyte lipid storage by inhibiting beta-oxidation and triacylglycerol secretion while enhancing lipid synthesis. Restricts age-associated inflammation by negatively regulating differentiation of macrophages and their production of pro-inflammatory cytokines. Plays a role in negatively regulating the abundance of regulatory T cells in white adipose tissue. This Pongo abelii (Sumatran orangutan) protein is Serine/threonine-protein kinase TAO3 (TAOK3).